Reading from the N-terminus, the 351-residue chain is Nicotinate-nucleotide--dimethylbenzimidazole phosphoribosyltransferase (351 aa).

The active-site Proton acceptor is the Glu317.

The protein belongs to the CobT family.

The enzyme catalyses 5,6-dimethylbenzimidazole + nicotinate beta-D-ribonucleotide = alpha-ribazole 5'-phosphate + nicotinate + H(+). The protein operates within nucleoside biosynthesis; alpha-ribazole biosynthesis; alpha-ribazole from 5,6-dimethylbenzimidazole: step 1/2. Catalyzes the synthesis of alpha-ribazole-5'-phosphate from nicotinate mononucleotide (NAMN) and 5,6-dimethylbenzimidazole (DMB). This chain is Nicotinate-nucleotide--dimethylbenzimidazole phosphoribosyltransferase, found in Bradyrhizobium sp. (strain ORS 278).